Consider the following 299-residue polypeptide: Bifunctional protein FolD (299 aa).

Residues 168–170 (GRS), Ser193, and Ile234 each bind NADP(+).

Belongs to the tetrahydrofolate dehydrogenase/cyclohydrolase family. In terms of assembly, homodimer.

It catalyses the reaction (6R)-5,10-methylene-5,6,7,8-tetrahydrofolate + NADP(+) = (6R)-5,10-methenyltetrahydrofolate + NADPH. The catalysed reaction is (6R)-5,10-methenyltetrahydrofolate + H2O = (6R)-10-formyltetrahydrofolate + H(+). It participates in one-carbon metabolism; tetrahydrofolate interconversion. Functionally, catalyzes the oxidation of 5,10-methylenetetrahydrofolate to 5,10-methenyltetrahydrofolate and then the hydrolysis of 5,10-methenyltetrahydrofolate to 10-formyltetrahydrofolate. This Brucella anthropi (strain ATCC 49188 / DSM 6882 / CCUG 24695 / JCM 21032 / LMG 3331 / NBRC 15819 / NCTC 12168 / Alc 37) (Ochrobactrum anthropi) protein is Bifunctional protein FolD.